We begin with the raw amino-acid sequence, 344 residues long: Endoplasmic reticulum junction formation protein lunapark-1 (344 aa).

Topologically, residues 1–39 (MGNLFSRTKSPATELERVVLSIEDFKKRLQTISASNSST) are cytoplasmic. A helical membrane pass occupies residues 40 to 60 (LYYYYMGVIIILSIAMAHTWL). The Lumenal segment spans residues 61-68 (RFDDPTKT). Residues 69 to 89 (YVACALVFGATVIVLTGRYII) traverse the membrane as a helical segment. At 90–344 (NCFFAWRTNR…ADETAVVEKS (255 aa)) the chain is on the cytoplasmic side. A coiled-coil region spans residues 116-140 (DLVKETLKFKEAKEILDRYEEKTEA). 2 disordered regions span residues 136–155 (EKTE…HQQK) and 171–192 (QKRV…IAFD). A compositionally biased stretch (polar residues) spans 140 to 155 (AGNTPTENSKLIHQQK). The segment at 239–264 (CSICHTHNGMSVPAEYPFISFRCFEC) adopts a C4-type; plays a role in ER morphology zinc-finger fold. The disordered stretch occupies residues 275-344 (PHLPITRPPM…ADETAVVEKS (70 aa)). The segment covering 312–326 (PNPSTDLTPSASQHG) has biased composition (polar residues). A compositionally biased stretch (basic and acidic residues) spans 327-344 (SDSEPEKNADETAVVEKS).

It belongs to the lunapark family.

It localises to the endoplasmic reticulum membrane. In terms of biological role, plays a role in tubular endoplasmic reticulum network formation and maintenance. May be involved in central nervous system development. Has a presynaptic role in neurotransmission. Likely to operate in synaptogenesis by regulating vesicular transport or localization. Required for correct localization of rab-3 and snb-1. This is Endoplasmic reticulum junction formation protein lunapark-1 from Caenorhabditis briggsae.